A 254-amino-acid chain; its full sequence is 3-deoxy-manno-octulosonate cytidylyltransferase (254 aa).

It belongs to the KdsB family.

The protein resides in the cytoplasm. The enzyme catalyses 3-deoxy-alpha-D-manno-oct-2-ulosonate + CTP = CMP-3-deoxy-beta-D-manno-octulosonate + diphosphate. Its pathway is nucleotide-sugar biosynthesis; CMP-3-deoxy-D-manno-octulosonate biosynthesis; CMP-3-deoxy-D-manno-octulosonate from 3-deoxy-D-manno-octulosonate and CTP: step 1/1. It participates in bacterial outer membrane biogenesis; lipopolysaccharide biosynthesis. Its function is as follows. Activates KDO (a required 8-carbon sugar) for incorporation into bacterial lipopolysaccharide in Gram-negative bacteria. This chain is 3-deoxy-manno-octulosonate cytidylyltransferase, found in Chlamydia trachomatis serovar L2 (strain ATCC VR-902B / DSM 19102 / 434/Bu).